The chain runs to 776 residues: Isoamylase (776 aa).

The N-terminal stretch at 1–26 is a signal peptide; the sequence is MKCPKILAALLGCAVLAGVPAMPAHA. Residues aspartate 154, glutamate 255, threonine 256, asparagine 258, and aspartate 285 each contribute to the Ca(2+) site. Catalysis depends on aspartate 401, which acts as the Nucleophile. A disulfide bridge links cysteine 410 with cysteine 422. The active-site Proton donor is the glutamate 461. Cystine bridges form between cysteine 546–cysteine 616 and cysteine 738–cysteine 766.

It belongs to the glycosyl hydrolase 13 family. In terms of assembly, monomer. It depends on Ca(2+) as a cofactor.

Its subcellular location is the secreted. The catalysed reaction is Hydrolysis of (1-&gt;6)-alpha-D-glucosidic branch linkages in glycogen, amylopectin and their beta-limit dextrins.. This Pseudomonas amyloderamosa protein is Isoamylase (iam).